The following is a 384-amino-acid chain: Probable 2-heptyl-3-hydroxy-4(1H)-quinolone synthase AqdB2 (384 aa).

The protein belongs to the 3-hydroxybenzoate 6-hydroxylase family.

It carries out the reaction 2-heptyl-4(1H)-quinolone + NADH + O2 + H(+) = 2-heptyl-3-hydroxy-4(1H)-quinolone + NAD(+) + H2O. Its function is as follows. Involved in the degradation of the Pseudomonas aeruginosa quorum sensing signal molecule HHQ (2-heptyl-4-quinolone) to anthranilic acid. Probably catalyzes the hydroxylation of HHQ to PQS (2-heptyl-3-hydroxy-4-quinolone). In Rhodococcus erythropolis (Arthrobacter picolinophilus), this protein is Probable 2-heptyl-3-hydroxy-4(1H)-quinolone synthase AqdB2.